The sequence spans 445 residues: Phosphoglucosamine mutase (445 aa).

S102 acts as the Phosphoserine intermediate in catalysis. Residues S102, D241, D243, and D245 each coordinate Mg(2+). S102 carries the phosphoserine modification.

It belongs to the phosphohexose mutase family. Requires Mg(2+) as cofactor. Post-translationally, activated by phosphorylation.

The enzyme catalyses alpha-D-glucosamine 1-phosphate = D-glucosamine 6-phosphate. Its function is as follows. Catalyzes the conversion of glucosamine-6-phosphate to glucosamine-1-phosphate. The protein is Phosphoglucosamine mutase of Haemophilus influenzae (strain PittEE).